Consider the following 1001-residue polypeptide: O-GlcNAcase NagJ (1001 aa).

The signal sequence occupies residues 1-30; the sequence is MKRKMLKRLLTSAFACMFIANGLITTTVRA. The segment at 179-469 is catalytic domain; it reads VSARGIVEGF…WNRAIDMLYG (291 aa). The GH84 domain occupies 180–452; the sequence is SARGIVEGFY…TAADYSWNMD (273 aa). 3 residues coordinate a protein: G187, K218, and D297. D298 functions as the Proton donor in the catalytic mechanism. Residues Y335, 394-396, D401, and N429 each bind a protein; that span reads WWN. Coiled coils occupy residues 515 to 543 and 573 to 597; these read KEDASALIEELYGEFARMEEACNNLKANL and VAQLNEDTEAYESAKEIAQNKLNTA. In terms of domain architecture, Fibronectin type-III spans 916–1001; it reads PVRDFKASEI…KESLTLRTAR (86 aa).

This sequence belongs to the glycosyl hydrolase 84 family.

The enzyme catalyses 3-O-(N-acetyl-beta-D-glucosaminyl)-L-seryl-[protein] + H2O = N-acetyl-D-glucosamine + L-seryl-[protein]. It catalyses the reaction 3-O-(N-acetyl-beta-D-glucosaminyl)-L-threonyl-[protein] + H2O = L-threonyl-[protein] + N-acetyl-D-glucosamine. With respect to regulation, inhibited by O-(2-acetamido-2-deoxy-D-glucopyranosylidene)amino-N-phenyl-carbamate (PUGNAc) and streptozotocin. Its function is as follows. Binds carbohydrates. Capable of hydrolyzing the glycosidic link of O-GlcNAcylated proteins. Can bind and deglycosylate O-glycosylated peptides from mammals. This chain is O-GlcNAcase NagJ (nagJ), found in Clostridium perfringens (strain ATCC 13124 / DSM 756 / JCM 1290 / NCIMB 6125 / NCTC 8237 / Type A).